A 383-amino-acid chain; its full sequence is Proton extrusion protein PxcA (383 aa).

4 helical membrane passes run 163-183, 258-278, 306-326, and 341-361; these read ILLLLILVPLLIQQVAGAYII, AVKNVFSDLSALIAFTVVCFA, IILFTDIFVGFHSPEGWTVLL, and FVMLFIATFPVILATIFKYWI.

The protein belongs to the CemA family.

The protein localises to the cell inner membrane. Functionally, required for H(+) efflux immediately after light irradiation to form a rapid H(+) concentration gradient across the thylakoid membranes. Together with PxcL, contributes to transient H(+) uptake following dark to light transition. In Synechococcus sp. (strain CC9902), this protein is Proton extrusion protein PxcA.